The sequence spans 339 residues: N-acetylornithine carbamoyltransferase (339 aa).

Residues 49 to 52 (SMRT), Trp77, and Arg112 contribute to the carbamoyl phosphate site. Glu144 serves as a coordination point for N(2)-acetyl-L-ornithine. Position 148-151 (148-151 (HPCQ)) interacts with carbamoyl phosphate. N(2)-acetyl-L-ornithine-binding residues include Lys252 and Leu295. 294-295 (CL) lines the carbamoyl phosphate pocket. Lys302 carries the post-translational modification N6-carboxylysine. Carbamoyl phosphate is bound at residue Arg322.

Belongs to the aspartate/ornithine carbamoyltransferase superfamily. AOTCase family. As to quaternary structure, homotrimer.

The protein localises to the cytoplasm. It catalyses the reaction N(2)-acetyl-L-ornithine + carbamoyl phosphate = N(2)-acetyl-L-citrulline + phosphate + H(+). It functions in the pathway amino-acid biosynthesis; L-arginine biosynthesis. Carboxylation at Lys-302 increases the catalytic activity of the enzyme. Is potently inhibited by N(alpha)-acetyl-N(delta)-phosphonoacetyl-L-ornithine (PALAO). Catalyzes the transfer of the carbamoyl group from carbamoyl phosphate to the delta-amino group of N(2)-acetyl-L-ornithine to produce N(2)-acetyl-L-citrulline. This is a step in an alternative arginine biosynthesis pathway. The enzyme has no activity with ornithine. The protein is N-acetylornithine carbamoyltransferase of Xanthomonas campestris pv. campestris (strain ATCC 33913 / DSM 3586 / NCPPB 528 / LMG 568 / P 25).